The chain runs to 1597 residues: MEKNERFKMHKVKKRWVTISVASATMLASALGASVASADTETVSEDSNQAVLTADQTTTNQDTEQTSVAATATSEQSASTDAATDQASATDQASAAEQTQGTTASTDTAAQTTTNANEAKWVPTENENQVFTDEMLAEAKNVATAESNSIPSDLAKMSNVKQVDGKYYYYDQDGNVKKNFAVSVGEKIYYFDETGAYKDTSKVEADKSGSDISKEETTFAANNRAYSTSAENFEAIDNYLTADSWYRPKSILKDGKTWTESSKDDFRPLLMAWWPDTETKRNYVNYMNKVVGIDKTYTAETSQADLTAAAELVQARIEQKITTEQNTKWLREAISAFVKTQPQWNGESEKPYDDHLQNGALKFDNQSDLTPDTQSNYRLLNRTPTNQTGSLDSRFTYNANDPLGGYELLLANDVDNSNPIVQAEQLNWLHYLLNFGTIYAKDADANFDSIRVDAVDNVDADLLQISSDYLKAAYGIDKNNKNANNHVSIVEAWSDNDTPYLHDDGDNLMNMDNKFRLSMLWSLAKPLDKRSGLNPLIHNSLVDREVDDREVETVPSYSFARAHDSEVQDLIRDIIKAEINPNAFGYSFTQDEIDQAFKIYNEDLKKTDKKYTHYNVPLSYTLLLTNKGSIPRVYYGDMFTDDGQYMANKTVNYDAIESLLKARMKYVAGGQAMQNYQIGNGEILTSVRYGKGALKQSDKGDATTRTSGVGVVMGNQPNFSLDGKVVALNMGAAHANQEYRALMVSTKDGVATYATDADASKAGLVKRTDENGYLYFLNDDLKGVANPQVSGFLQVWVPVGAADDQDIRVAASDTASTDGKSLHQDAAMDSRVMFEGFSNFQSFATKEEEYTNVVIANNVDKFVSWGITDFEMAPQYVSSTDGQFLDSVIQNGYAFTDRYDLGMSKANKYGTADQLVKAIKALHAKGLKVMADWVPDQMYTFPKQEVVTVTRTDKFGKPIAGSQINHSLYVTDTKSSGDDYQAKYGGAFLDELKEKYPELFTKKQISTGQAIDPSVKIKQWSAKYFNGSNILGRGADYVLSDQASNKYLNVSDDKLFLPKTLLGQVVESGIRFDGTGYVYNSSTTGEKVTDSFITEAGNLYYFGQDGYMVTGAQNIKGSNYYFLANGAALRNTVYTDAQGQNHYYGNDGKRYENGYQQFGNDSWRYFKNGVMALGLTTVDGHVQYFDKDGVQAKDKIIVTRDGKVRYFDQHNGNAVTNTFVADKTGHWYYLGKDGVAVTGAQTVGKQHLYFEANGQQVKGDFVTAKDGKLYFYDVDSGDMWTNTFIEDKAGNWFYLGKDGAAVTGAQTIKGQKLYFKANGQQVKGDIVKDADGKIRYYDAQTGEQVFNKSVSVNGKTYYFGSDGTAQTQANPKGQTFKDGSGVLRFYNLEGQYVSGSGWYETAEHEWVYVKSGKVLTGAQTIGNQRVYFKDNGHQVKGQLVTGNDGKLRYYDANSGDQAFNKSVTVNGKTYYFGSDGTAQTQANPKGQTFKDGSGVLRFYNLEGQYVSGSGWYKNAQGQWLYVKDGKVLTGLQTVGNQKVYFDKNGIQAKGKAVRTSDGKVRYFDENSGSMITNQWKFVYGQYYYFGSDGAAVYRGWN.

The N-terminal stretch at 1 to 38 (MEKNERFKMHKVKKRWVTISVASATMLASALGASVASA) is a signal peptide. Positions 52-120 (LTADQTTTNQ…QTTTNANEAK (69 aa)) are disordered. Residues 53–114 (TADQTTTNQD…STDTAAQTTT (62 aa)) are compositionally biased toward low complexity. Cell wall-binding repeat units follow at residues 157-176 (MSNVKQVDGKYYYYDQDGNV) and 178-197 (KNFAVSVGEKIYYFDETGAY). Positions 200–1050 (TSKVEADKSG…DQASNKYLNV (851 aa)) are catalytic; approximate. Cell wall-binding repeat units lie at residues 1089–1108 (TDSFITEAGNLYYFGQDGYM), 1109–1128 (VTGAQNIKGSNYYFLANGAA), 1130–1150 (RNTVYTDAQGQNHYYGNDGKR), 1152–1172 (ENGYQQFGNDSWRYFKNGVMA), 1173–1191 (LGLTTVDGHVQYFDKDGVQ), 1193–1214 (KDKIIVTRDGKVRYFDQHNGNA), 1216–1236 (TNTFVADKTGHWYYLGKDGVA), 1237–1256 (VTGAQTVGKQHLYFEANGQQ), 1258–1279 (KGDFVTAKDGKLYFYDVDSGDM), 1281–1301 (TNTFIEDKAGNWFYLGKDGAA), 1302–1321 (VTGAQTIKGQKLYFKANGQQ), 1323–1343 (KGDIVKDADGKIRYYDAQTGE), 1344–1365 (QVFNKSVSVNGKTYYFGSDGTA), 1366–1380 (QTQANPKGQTFKDGS), 1415–1434 (LTGAQTIGNQRVYFKDNGHQ), 1436–1457 (KGQLVTGNDGKLRYYDANSGDQ), 1459–1478 (FNKSVTVNGKTYYFGSDGTA), 1485–1505 (KGQTFKDGSGVLRFYNLEGQY), 1508–1527 (GSGWYKNAQGQWLYVKDGKV), 1528–1547 (LTGLQTVGNQKVYFDKNGIQ), 1549–1570 (KGKAVRTSDGKVRYFDENSGSM), and 1572–1591 (TNQWKFVYGQYYYFGSDGAA). The glucan-binding; approximate stretch occupies residues 1099-1597 (LYYFGQDGYM…DGAAVYRGWN (499 aa)).

It belongs to the glycosyl hydrolase 70 family.

The protein resides in the secreted. It carries out the reaction [(1-&gt;6)-alpha-D-glucosyl](n) + sucrose = [(1-&gt;6)-alpha-D-glucosyl](n+1) + D-fructose. Production of extracellular glucans, that are thought to play a key role in the development of the dental plaque because of their ability to adhere to smooth surfaces and mediate the aggregation of bacterial cells and food debris. The chain is Glucosyltransferase-I (gtfI) from Streptococcus downei (Streptococcus sobrinus).